The chain runs to 248 residues: 3-deoxy-manno-octulosonate cytidylyltransferase (248 aa).

This sequence belongs to the KdsB family.

It localises to the cytoplasm. The enzyme catalyses 3-deoxy-alpha-D-manno-oct-2-ulosonate + CTP = CMP-3-deoxy-beta-D-manno-octulosonate + diphosphate. It participates in nucleotide-sugar biosynthesis; CMP-3-deoxy-D-manno-octulosonate biosynthesis; CMP-3-deoxy-D-manno-octulosonate from 3-deoxy-D-manno-octulosonate and CTP: step 1/1. The protein operates within bacterial outer membrane biogenesis; lipopolysaccharide biosynthesis. In terms of biological role, activates KDO (a required 8-carbon sugar) for incorporation into bacterial lipopolysaccharide in Gram-negative bacteria. The chain is 3-deoxy-manno-octulosonate cytidylyltransferase from Shigella boydii serotype 18 (strain CDC 3083-94 / BS512).